The sequence spans 81 residues: Small ribosomal subunit protein eS21 (81 aa).

It belongs to the eukaryotic ribosomal protein eS21 family. In terms of assembly, component of the 40S small ribosomal subunit.

It localises to the cytoplasm. Its subcellular location is the cytosol. It is found in the rough endoplasmic reticulum. Its function is as follows. Component of the small ribosomal subunit. The ribosome is a large ribonucleoprotein complex responsible for the synthesis of proteins in the cell. This is Small ribosomal subunit protein eS21 (rps21) from Danio rerio (Zebrafish).